The sequence spans 588 residues: DNA ligase (588 aa).

Glu248 contacts ATP. Residue Lys250 is the N6-AMP-lysine intermediate of the active site. Positions 255, 270, 300, 341, 418, and 424 each coordinate ATP.

It belongs to the ATP-dependent DNA ligase family. Requires Mg(2+) as cofactor.

The catalysed reaction is ATP + (deoxyribonucleotide)n-3'-hydroxyl + 5'-phospho-(deoxyribonucleotide)m = (deoxyribonucleotide)n+m + AMP + diphosphate.. In terms of biological role, DNA ligase that seals nicks in double-stranded DNA during DNA replication, DNA recombination and DNA repair. The sequence is that of DNA ligase from Thermoplasma volcanium (strain ATCC 51530 / DSM 4299 / JCM 9571 / NBRC 15438 / GSS1).